The primary structure comprises 427 residues: 3-phosphoshikimate 1-carboxyvinyltransferase (427 aa).

Residues Lys-22, Ser-23, and Arg-27 each coordinate 3-phosphoshikimate. Lys-22 serves as a coordination point for phosphoenolpyruvate. Gly-96 and Arg-124 together coordinate phosphoenolpyruvate. 3-phosphoshikimate-binding residues include Ser-169, Ser-170, Gln-171, Ser-197, Asp-313, Asn-336, and Lys-340. Gln-171 lines the phosphoenolpyruvate pocket. The active-site Proton acceptor is the Asp-313. Phosphoenolpyruvate is bound by residues Arg-344, Arg-386, and Lys-411.

The protein belongs to the EPSP synthase family. As to quaternary structure, monomer.

It localises to the cytoplasm. The catalysed reaction is 3-phosphoshikimate + phosphoenolpyruvate = 5-O-(1-carboxyvinyl)-3-phosphoshikimate + phosphate. It functions in the pathway metabolic intermediate biosynthesis; chorismate biosynthesis; chorismate from D-erythrose 4-phosphate and phosphoenolpyruvate: step 6/7. Its function is as follows. Catalyzes the transfer of the enolpyruvyl moiety of phosphoenolpyruvate (PEP) to the 5-hydroxyl of shikimate-3-phosphate (S3P) to produce enolpyruvyl shikimate-3-phosphate and inorganic phosphate. This is 3-phosphoshikimate 1-carboxyvinyltransferase from Salmonella typhi.